We begin with the raw amino-acid sequence, 410 residues long: MTKKPWERRLKDLSHLLKCCIDTYFDPELFRLNLNQFLQTARTVTFIIQKNKNQIIGYDIWYNNNVIEKWKNDPLMAWAKNSRNTIEKQGDLEMYSEAKATLISSYIEENDIEFITNESMLNIGIKKLVRLAQKKLPSYLTESSIIKSERRWVANTLKDYELLHALAIIYGRMYNCCNSLGIQINNPMGDDVISPTSFDSLFDEARRITYLKLKDYSISKLSFSMIQYDNKIIPEDIKERLKLVDKPKNITSTEELVDYTAKLAETTFLKDGYHIQTLIFYDKQFHPIDLINTTFEDQADKYIFWRYAADRAKITNAYGFIWISELWLRKASIYSNKPIHTMPIIDERLQVIGIDSNNNQKCISWKIVRENEEKKPTLEISTADSKHDEKPYFMRSVLKAIGGDVNTMNN.

The protein is Protein ea47 (ea47) of Escherichia coli (Bacteriophage lambda).